The sequence spans 523 residues: DNA primase (523 aa).

The segment at 37-61 adopts a CHC2-type zinc-finger fold; the sequence is CPFHAEKTPSFFVNPLQGYFYCFGC. The 82-residue stretch at 259-340 folds into the Toprim domain; it reads KSVILVEGYI…NVSVVRMDFG (82 aa). Residues glutamate 265, aspartate 309, and aspartate 311 each contribute to the Mg(2+) site.

Belongs to the DnaG primase family. As to quaternary structure, monomer. Interacts with DnaB. Zn(2+) is required as a cofactor. The cofactor is Mg(2+).

The enzyme catalyses ssDNA + n NTP = ssDNA/pppN(pN)n-1 hybrid + (n-1) diphosphate.. RNA polymerase that catalyzes the synthesis of short RNA molecules used as primers for DNA polymerase during DNA replication. The chain is DNA primase from Borreliella burgdorferi (strain ATCC 35210 / DSM 4680 / CIP 102532 / B31) (Borrelia burgdorferi).